The primary structure comprises 223 residues: Zinc-finger homeodomain protein 12 (223 aa).

A compositionally biased stretch (polar residues) spans 1-20 (MSSLSKPNRQFLSPTTNNQD). A disordered region spans residues 1–24 (MSSLSKPNRQFLSPTTNNQDTGRE). Residues 37–88 (YNECLKNHAVSLGGHALDGCGEFTPKSTTILTDPPSLRCDACGCHRNFHRRS) form a ZF-HD dimerization-type; degenerate zinc finger. The segment at residues 147–204 (KKHKRTKFTAEQKVKMRGFAERAGWKINGWDEKWVREFCSEVGIERKVLKVWIHNNKY) is a DNA-binding region (homeobox; atypical).

Homo- and heterodimer with other ZFHD proteins. Interacts with ZHD11.

It is found in the nucleus. In terms of biological role, putative transcription factor. In Arabidopsis thaliana (Mouse-ear cress), this protein is Zinc-finger homeodomain protein 12 (ZHD12).